A 317-amino-acid chain; its full sequence is Transaldolase (317 aa).

Catalysis depends on Lys132, which acts as the Schiff-base intermediate with substrate.

Belongs to the transaldolase family. Type 1 subfamily. In terms of assembly, homodimer.

The protein resides in the cytoplasm. It catalyses the reaction D-sedoheptulose 7-phosphate + D-glyceraldehyde 3-phosphate = D-erythrose 4-phosphate + beta-D-fructose 6-phosphate. Its pathway is carbohydrate degradation; pentose phosphate pathway; D-glyceraldehyde 3-phosphate and beta-D-fructose 6-phosphate from D-ribose 5-phosphate and D-xylulose 5-phosphate (non-oxidative stage): step 2/3. Transaldolase is important for the balance of metabolites in the pentose-phosphate pathway. This chain is Transaldolase, found in Haemophilus influenzae (strain PittEE).